A 300-amino-acid chain; its full sequence is Putative zinc finger protein 705EP (300 aa).

In terms of domain architecture, KRAB spans 7 to 78 (VTFEDVAIDF…GREFLQDQNP (72 aa)). A C2H2-type 1; degenerate zinc finger spans residues 172 to 194 (YQCNLCEKAYTNCFHLRRPKMTH). C2H2-type zinc fingers lie at residues 200-222 (YTCH…EKTH) and 228-250 (YKCH…ERTH). The segment at 256-278 (YECDNSGKAFSQSSGFRGNKIIH) adopts a C2H2-type 4; degenerate zinc-finger fold.

Belongs to the krueppel C2H2-type zinc-finger protein family.

The protein localises to the nucleus. Functionally, may be involved in transcriptional regulation. The protein is Putative zinc finger protein 705EP of Homo sapiens (Human).